The sequence spans 443 residues: UDP-N-acetylmuramate--L-alanine ligase (443 aa).

110–116 lines the ATP pocket; that stretch reads GAHGKTS.

It belongs to the MurCDEF family.

The protein resides in the cytoplasm. The enzyme catalyses UDP-N-acetyl-alpha-D-muramate + L-alanine + ATP = UDP-N-acetyl-alpha-D-muramoyl-L-alanine + ADP + phosphate + H(+). The protein operates within cell wall biogenesis; peptidoglycan biosynthesis. In terms of biological role, cell wall formation. The sequence is that of UDP-N-acetylmuramate--L-alanine ligase from Streptococcus equi subsp. zooepidemicus (strain H70).